A 319-amino-acid polypeptide reads, in one-letter code: Tetrahydromethanopterin S-methyltransferase subunit H (319 aa).

This sequence belongs to the MtrH family. In terms of assembly, the complex is composed of 8 subunits; MtrA, MtrB, MtrC, MtrD, MtrE, MtrF, MtrG and MtrH.

It catalyses the reaction 5-methyl-5,6,7,8-tetrahydromethanopterin + coenzyme M + 2 Na(+)(in) = 5,6,7,8-tetrahydromethanopterin + methyl-coenzyme M + 2 Na(+)(out). It participates in one-carbon metabolism; methanogenesis from CO(2); methyl-coenzyme M from 5,10-methylene-5,6,7,8-tetrahydromethanopterin: step 2/2. Its function is as follows. Part of a complex that catalyzes the formation of methyl-coenzyme M and tetrahydromethanopterin from coenzyme M and methyl-tetrahydromethanopterin. This is an energy-conserving, sodium-ion translocating step. MtrH catalyzes the transfer of the methyl group from methyl-tetrahydromethanopterin to the corrinoid prosthetic group of MtrA. This is Tetrahydromethanopterin S-methyltransferase subunit H from Methanocaldococcus jannaschii (strain ATCC 43067 / DSM 2661 / JAL-1 / JCM 10045 / NBRC 100440) (Methanococcus jannaschii).